The following is a 153-amino-acid chain: SsrA-binding protein (153 aa).

Residues 129 to 153 (KREDMKKKDQSREMAQALRERSKSH) are disordered.

It belongs to the SmpB family.

It localises to the cytoplasm. Its function is as follows. Required for rescue of stalled ribosomes mediated by trans-translation. Binds to transfer-messenger RNA (tmRNA), required for stable association of tmRNA with ribosomes. tmRNA and SmpB together mimic tRNA shape, replacing the anticodon stem-loop with SmpB. tmRNA is encoded by the ssrA gene; the 2 termini fold to resemble tRNA(Ala) and it encodes a 'tag peptide', a short internal open reading frame. During trans-translation Ala-aminoacylated tmRNA acts like a tRNA, entering the A-site of stalled ribosomes, displacing the stalled mRNA. The ribosome then switches to translate the ORF on the tmRNA; the nascent peptide is terminated with the 'tag peptide' encoded by the tmRNA and targeted for degradation. The ribosome is freed to recommence translation, which seems to be the essential function of trans-translation. The polypeptide is SsrA-binding protein (Geobacter metallireducens (strain ATCC 53774 / DSM 7210 / GS-15)).